Reading from the N-terminus, the 310-residue chain is MTEVDFDVAIIGAGPAGMTAAVYASRANLKTVMIERGMPGGQMANTEEVENFPGFEMITGPDLSTKMFEHAKKFGAEYQYGDIKSVEDKGDYKVINLGNKEITAHAVIISTGAEYKKIGVPGEQELGGRGVSYCAVCDGAFFKNKRLFVIGGGDSAVEEGTFLTKFADKVTIVHRRDELRAQNILQERAFKNDKVDFIWSHTLKTINEKDGKVGSVTLESTKDGAEQTYDADGVFIYIGMKPLTAPFKNLGITNDAGYIVTQDDMSTKVRGIFAAGDVRDKGLRQIVTATGDGSIAAQSAADYITELKDN.

An FAD-binding site is contributed by glutamate 35–glutamine 42. Cysteine 134 and cysteine 137 are oxidised to a cystine. Aspartate 277–isoleucine 286 lines the FAD pocket.

It belongs to the class-II pyridine nucleotide-disulfide oxidoreductase family. In terms of assembly, homodimer. FAD serves as cofactor.

The protein localises to the cytoplasm. The catalysed reaction is [thioredoxin]-dithiol + NADP(+) = [thioredoxin]-disulfide + NADPH + H(+). The chain is Thioredoxin reductase (trxB) from Staphylococcus epidermidis (strain ATCC 35984 / DSM 28319 / BCRC 17069 / CCUG 31568 / BM 3577 / RP62A).